The chain runs to 246 residues: Eukaryotic translation initiation factor 6 (246 aa).

Phosphoserine; by CK1 is present on residues Ser174 and Ser175.

The protein belongs to the eIF-6 family. Monomer. Associates with the 60S ribosomal subunit. Post-translationally, phosphorylation at Ser-174 and Ser-175 promotes nuclear export.

Its subcellular location is the cytoplasm. The protein resides in the nucleus. The protein localises to the nucleolus. Binds to the 60S ribosomal subunit and prevents its association with the 40S ribosomal subunit to form the 80S initiation complex in the cytoplasm. Is also involved in ribosome biogenesis. Associates with pre-60S subunits in the nucleus and is involved in its nuclear export. The chain is Eukaryotic translation initiation factor 6 from Sordaria macrospora (strain ATCC MYA-333 / DSM 997 / K(L3346) / K-hell).